A 310-amino-acid polypeptide reads, in one-letter code: Pantothenate kinase (310 aa).

Position 95-102 (Gly95–Ser102) interacts with ATP.

This sequence belongs to the prokaryotic pantothenate kinase family.

The protein resides in the cytoplasm. It catalyses the reaction (R)-pantothenate + ATP = (R)-4'-phosphopantothenate + ADP + H(+). Its pathway is cofactor biosynthesis; coenzyme A biosynthesis; CoA from (R)-pantothenate: step 1/5. In Rhodococcus jostii (strain RHA1), this protein is Pantothenate kinase.